The sequence spans 1203 residues: Delphilin (1203 aa).

Residues 1 to 79 (MPATNQGWPE…VPPSLGVLPG (79 aa)) form the PDZ 1 domain. Alanine 3 carries the S-palmitoyl cysteine lipid modification. Residues 215 to 270 (GAQRLRRSRSEERPERLLVSTRASAAPRRPDEPPPRKATSLLGGRTGPGGPRRTVR) form a disordered region. Positions 231–241 (LLVSTRASAAP) are enriched in low complexity. One can recognise a PDZ 2 domain in the interval 268 to 345 (TVRVYKGNKS…MPTLVVEEGP (78 aa)). Residue serine 303 is modified to Phosphoserine. 4 disordered regions span residues 466–541 (ESSL…TPNP), 563–586 (IGTM…GPRT), 611–656 (LASP…PPSR), and 710–821 (SFVT…SHMS). Polar residues predominate over residues 500 to 509 (RSQGLETSLS). Serine 572, serine 613, serine 644, and serine 647 each carry phosphoserine. Residues 611-625 (LASPSSSESHPYASL) show a composition bias toward low complexity. Positions 715–740 (ERSSASECVSSSEEGSSLTYSSISDH) are enriched in low complexity. A compositionally biased stretch (pro residues) spans 741–756 (IPPPPLSPPPPPPLPF). Residues 774-784 (QSLTKPLTQIN) are compositionally biased toward polar residues. The segment covering 786-803 (PVPPPPPPPLPPPVPCAP) has biased composition (pro residues). An FH2 domain is found at 812–1203 (HRRSETSHMS…SSGMVSPLAW (392 aa)).

In terms of assembly, interacts with C-terminus of the glutamate receptor GRID2 via PDZ domain. Isoform 2 also interacts with Profilin-2/PFN2 and with the monocarboxylate transporter SLC16A7 via PDZ domain. The interaction of isoform 2 with GRID2 is dependent on GRID2 phosphorylation by PKA. Post-translationally, isoform 2 is palmitoylated. Palmitoylation of isoform 2 is necessary for the enhanced cell surface expression of GRID2, and is also responsible for the accumulation of isoform 2 within dendritic spines. Isoform 1 and isoform 2 are differentially localized, probably modulating GRID2 signaling in neurons. In terms of tissue distribution, isoform 1 is expressed in the cerebellum, but not in the cerebral cortex. Isoform 2 is expressed in the cell body of purkinge cells of the cerebellum and weakly expressed in the cerebrum and the brainstem as well as various nuclei of the thalamus. Isoform 2 is highly expressed in the cerebral cortex than in the cerebellum. Isoform 3 is expressed in the cerebellum and cerebrum.

The protein localises to the postsynaptic cell membrane. It localises to the cell projection. Its subcellular location is the dendritic spine. The protein resides in the synapse. It is found in the cell membrane. In terms of biological role, postsynaptic scaffolding protein at the Purkinje cell synapse, where it may serve to link GRID2 with actin cytoskeleton and various signaling molecules. The protein is Delphilin (Grid2ip) of Mus musculus (Mouse).